An 89-amino-acid polypeptide reads, in one-letter code: MSITAEEKTRLMKEFATKEGDTGSPEVQVAILTSRINTLTEHFKTHKKDNHGRRGLLKMVAQRRKLLDYLKGKEEARYQDLIKKLGIRR.

It belongs to the universal ribosomal protein uS15 family. As to quaternary structure, part of the 30S ribosomal subunit. Forms a bridge to the 50S subunit in the 70S ribosome, contacting the 23S rRNA.

Functionally, one of the primary rRNA binding proteins, it binds directly to 16S rRNA where it helps nucleate assembly of the platform of the 30S subunit by binding and bridging several RNA helices of the 16S rRNA. Its function is as follows. Forms an intersubunit bridge (bridge B4) with the 23S rRNA of the 50S subunit in the ribosome. The protein is Small ribosomal subunit protein uS15 of Ruegeria sp. (strain TM1040) (Silicibacter sp.).